A 358-amino-acid polypeptide reads, in one-letter code: Peptide chain release factor 1 (358 aa).

Glutamine 233 carries the post-translational modification N5-methylglutamine.

It belongs to the prokaryotic/mitochondrial release factor family. In terms of processing, methylated by PrmC. Methylation increases the termination efficiency of RF1.

It is found in the cytoplasm. Functionally, peptide chain release factor 1 directs the termination of translation in response to the peptide chain termination codons UAG and UAA. The chain is Peptide chain release factor 1 from Agathobacter rectalis (strain ATCC 33656 / DSM 3377 / JCM 17463 / KCTC 5835 / VPI 0990) (Eubacterium rectale).